A 186-amino-acid chain; its full sequence is UPF0398 protein LCA_0919 (186 aa).

Belongs to the UPF0398 family.

The protein is UPF0398 protein LCA_0919 of Latilactobacillus sakei subsp. sakei (strain 23K) (Lactobacillus sakei subsp. sakei).